The chain runs to 97 residues: Small ribosomal subunit protein uS19 (97 aa).

The interval 74-97 (FSPTRRFGGHPDKKAVKGKIEKQG) is disordered. Basic and acidic residues predominate over residues 82–97 (GHPDKKAVKGKIEKQG).

It belongs to the universal ribosomal protein uS19 family.

Its function is as follows. Protein S19 forms a complex with S13 that binds strongly to the 16S ribosomal RNA. In Petrotoga mobilis (strain DSM 10674 / SJ95), this protein is Small ribosomal subunit protein uS19.